A 108-amino-acid polypeptide reads, in one-letter code: Immunoglobulin kappa variable 11-125 (108 aa).

The tract at residues 1-23 is framework-1; sequence DVQMIQSPSSLSASLGDIVTMTC. Cysteines 23 and 88 form a disulfide. Positions 24-34 are complementarity-determining-1; sequence QASQGTSINLN. The interval 35–49 is framework-2; sequence WFQQKPGKAPKLLIY. The interval 50-56 is complementarity-determining-2; that stretch reads GASILED. Residues 57–88 are framework-3; the sequence is GVPSRFSGSRYGTDFTLTISSLEDEDMATYFC. The tract at residues 89-97 is complementarity-determining-3; it reads LQHSYLPYT. Residues 98-108 are framework-4; sequence FGGGTKLEIKR.

This is Immunoglobulin kappa variable 11-125 from Mus musculus (Mouse).